Reading from the N-terminus, the 322-residue chain is uncharacterized protein (322 aa).

This is an uncharacterized protein from Acanthamoeba polyphaga (Amoeba).